A 1603-amino-acid chain; its full sequence is DNA polymerase theta (1603 aa).

A Helicase ATP-binding domain is found at 38–208; it reads EARQFEDQHL…WLDGAKVFEA (171 aa). Residue 51 to 58 participates in ATP binding; that stretch reads APTSAGKS. The DEAH box signature appears at 149-152; that stretch reads DEMH. A Helicase C-terminal domain is found at 283–434; sequence TDSSLLEILK…GVLTRKRDAE (152 aa).

Belongs to the DNA polymerase type-A family.

Its subcellular location is the nucleus. The catalysed reaction is DNA(n) + a 2'-deoxyribonucleoside 5'-triphosphate = DNA(n+1) + diphosphate. Functionally, DNA polymerase that promotes microhomology-mediated end-joining (MMEJ), an alternative non-homologous end-joining (NHEJ) machinery triggered in response to double-strand breaks in DNA. MMEJ is an error-prone repair pathway that produces deletions of sequences from the strand being repaired and promotes genomic rearrangements, such as telomere fusions. Required to prevent extensive loss of sequences near G-quadruplex (G4) DNA sites, which are prone to cause genome alterations, by generating deletions. This chain is DNA polymerase theta, found in Caenorhabditis elegans.